Consider the following 217-residue polypeptide: Cytidylate kinase (217 aa).

11–19 (GPAGAGKST) contributes to the ATP binding site.

The protein belongs to the cytidylate kinase family. Type 1 subfamily.

The protein localises to the cytoplasm. The catalysed reaction is CMP + ATP = CDP + ADP. It catalyses the reaction dCMP + ATP = dCDP + ADP. In Clostridium perfringens (strain ATCC 13124 / DSM 756 / JCM 1290 / NCIMB 6125 / NCTC 8237 / Type A), this protein is Cytidylate kinase.